The following is a 417-amino-acid chain: D-amino acid dehydrogenase (417 aa).

3–17 serves as a coordination point for FAD; it reads AVVLGSGVVGLMSAW.

The protein belongs to the DadA oxidoreductase family. Requires FAD as cofactor.

The catalysed reaction is a D-alpha-amino acid + A + H2O = a 2-oxocarboxylate + AH2 + NH4(+). Oxidative deamination of D-amino acids. The protein is D-amino acid dehydrogenase of Vibrio vulnificus (strain CMCP6).